The chain runs to 425 residues: MATIYACRGFHRVPVKLSPSSTLQEVILSSYKQLGFSDWHNLELLHGDKKVDTSLLLRLSGIINGAKLIVKESATNQSGKSSSSISPQSKKIKVALQLPGAARIIDEASSETSIKQLLERHSLLTKVSHVLINGRNFKSEEFDNPLLLYGIREGSILIRLFPIKAQQSIVSEQAPVSQTFNGDVKEKKNADLMDIESENKKDDIVESFPKYPVDAHKLLEPLPTPIPSLPSTPSSYQNLPSQSLTGESLPTVSNQEKDEGVIEKVAVNNTPSVSSKSPFPKKKSFSSMLAQVKKEKAENNGSDGYDLQPTKSQLELYQSILRKRANQVSSTSLTKSSSPKPLPSSAIVKFDFGNGKSIVHEFSKDDNIETLRAFVASHLSPEESTSFQLTFSNYEALPTTGLIVEHIGRAVVRVHTISDPVYAQR.

The disordered stretch occupies residues 224 to 257; sequence TPIPSLPSTPSSYQNLPSQSLTGESLPTVSNQEK. Positions 236 to 254 are enriched in polar residues; that stretch reads YQNLPSQSLTGESLPTVSN. A Phosphoserine modification is found at Ser-338. The 50-residue stretch at 341–390 folds into the UBX domain; sequence PLPSSAIVKFDFGNGKSIVHEFSKDDNIETLRAFVASHLSPEESTSFQLT.

Its subcellular location is the cytoplasm. The protein resides in the nucleus. Functionally, involved in CDC48-dependent protein degradation through the ubiquitin/proteasome pathway. This chain is UBX domain-containing protein 4 (ubx4), found in Schizosaccharomyces pombe (strain 972 / ATCC 24843) (Fission yeast).